Reading from the N-terminus, the 196-residue chain is MIPVVIEQTSRGERSYDIYSRLLKDRIIMLTGPVEDNMANSIIAQLLFLDAQDPTKDIYLYVNTPGGSVSAGLAIVDTMNFIKADVQTIVMGTAASMGTIIASSGAKGKRFMLPNAEYMIHQPMGGTGGGTQQTDMAIAAEHLLKTRNKLEKILADNSGKTVKQIHKDAERDYWMSAEETLAYGFIDQIMDNTKVK.

Residue serine 96 is the Nucleophile of the active site. The active site involves histidine 121.

This sequence belongs to the peptidase S14 family. Fourteen ClpP subunits assemble into 2 heptameric rings which stack back to back to give a disk-like structure with a central cavity, resembling the structure of eukaryotic proteasomes.

It is found in the cytoplasm. The catalysed reaction is Hydrolysis of proteins to small peptides in the presence of ATP and magnesium. alpha-casein is the usual test substrate. In the absence of ATP, only oligopeptides shorter than five residues are hydrolyzed (such as succinyl-Leu-Tyr-|-NHMec, and Leu-Tyr-Leu-|-Tyr-Trp, in which cleavage of the -Tyr-|-Leu- and -Tyr-|-Trp bonds also occurs).. Functionally, cleaves peptides in various proteins in a process that requires ATP hydrolysis. Has a chymotrypsin-like activity. Plays a major role in the degradation of misfolded proteins. This chain is ATP-dependent Clp protease proteolytic subunit, found in Streptococcus suis (strain 98HAH33).